Reading from the N-terminus, the 356-residue chain is Vesicular integral-membrane protein VIP36 (356 aa).

The signal sequence occupies residues Met-1 to Ala-44. Topologically, residues Asp-45 to Arg-322 are lumenal. The L-type lectin-like domain maps to Glu-52–Leu-276. 2 residues coordinate a carbohydrate: Ser-96 and Asp-131. 3 residues coordinate Ca(2+): Asp-162, Tyr-164, and Asn-166. Tyr-164 to Asn-166 contacts a carbohydrate. Asn-183 carries N-linked (GlcNAc...) asparagine glycosylation. Residue His-190 coordinates a carbohydrate. Asp-193 provides a ligand contact to Ca(2+). The cysteines at positions 202 and 239 are disulfide-linked. Gly-260–Leu-262 serves as a coordination point for a carbohydrate. The chain crosses the membrane as a helical span at residues Val-323–Phe-345. Over Gln-346–Tyr-356 the chain is Cytoplasmic.

As to quaternary structure, monomer. Ca(2+) serves as cofactor. As to expression, expressed in kidney, liver, intestine, lung, spleen and heart. Low expression in brain.

It is found in the golgi apparatus membrane. Plays a role as an intracellular lectin in the early secretory pathway. Interacts with N-acetyl-D-galactosamine and high-mannose type glycans and may also bind to O-linked glycans. Involved in the transport and sorting of glycoproteins carrying high mannose-type glycans. This is Vesicular integral-membrane protein VIP36 (LMAN2) from Canis lupus familiaris (Dog).